We begin with the raw amino-acid sequence, 360 residues long: Peptide chain release factor 1 (360 aa).

Gln235 is modified (N5-methylglutamine). Residues 285–313 (KRQQAEASTRRNLLGSGDRSDRNRTYNFP) are disordered.

Belongs to the prokaryotic/mitochondrial release factor family. Methylated by PrmC. Methylation increases the termination efficiency of RF1.

The protein localises to the cytoplasm. Functionally, peptide chain release factor 1 directs the termination of translation in response to the peptide chain termination codons UAG and UAA. The chain is Peptide chain release factor 1 from Klebsiella pneumoniae (strain 342).